Here is a 135-residue protein sequence, read N- to C-terminus: Transcription antitermination protein NusB (135 aa).

The protein belongs to the NusB family.

Functionally, involved in transcription antitermination. Required for transcription of ribosomal RNA (rRNA) genes. Binds specifically to the boxA antiterminator sequence of the ribosomal RNA (rrn) operons. In Shewanella piezotolerans (strain WP3 / JCM 13877), this protein is Transcription antitermination protein NusB.